Reading from the N-terminus, the 540-residue chain is DM7 family protein GM11956 (540 aa).

The segment at 416–443 is disordered; sequence ATDTRGRDEIRTSCDQPQEKDEGSAEAD. The segment covering 417 to 443 has biased composition (basic and acidic residues); that stretch reads TDTRGRDEIRTSCDQPQEKDEGSAEAD.

It belongs to the DM7 family.

The polypeptide is DM7 family protein GM11956 (Drosophila sechellia (Fruit fly)).